We begin with the raw amino-acid sequence, 214 residues long: Guanylate kinase (214 aa).

Residues 6–192 (GTLYIISAPS…ALEDLKSIFR (187 aa)) form the Guanylate kinase-like domain. 13-20 (APSGAGKT) contributes to the ATP binding site.

Belongs to the guanylate kinase family.

The protein localises to the cytoplasm. The catalysed reaction is GMP + ATP = GDP + ADP. Its function is as follows. Essential for recycling GMP and indirectly, cGMP. The sequence is that of Guanylate kinase from Pseudomonas syringae pv. tomato (strain ATCC BAA-871 / DC3000).